The primary structure comprises 190 residues: Vascular endothelial growth factor A (190 aa).

Positions 1–26 (MNFLLSWVHWTLALLLYLHHAKWSQA) are cleaved as a signal peptide. 3 disulfide bridges follow: Cys-51–Cys-93, Cys-82–Cys-127, and Cys-86–Cys-129. Asn-100 is a glycosylation site (N-linked (GlcNAc...) asparagine).

It belongs to the PDGF/VEGF growth factor family. In terms of assembly, homodimer; disulfide-linked. Also found as heterodimer with PGF. Interacts with NRP1. Interacts with isoform 2 of BSG. Interacts with CD82; this interaction inhibits VEGFA-mediated signaling pathway.

It is found in the secreted. Growth factor active in angiogenesis, vasculogenesis and endothelial cell growth. Induces endothelial cell proliferation, promotes cell migration, inhibits apoptosis and induces permeabilization of blood vessels. Binds to the FLT1/VEGFR1 and KDR/VEGFR2 receptors, heparan sulfate and heparin. Binding to NRP1 receptor initiates a signaling pathway needed for motor neuron axon guidance and cell body migration, including for the caudal migration of facial motor neurons from rhombomere 4 to rhombomere 6 during embryonic development. Also binds the DEAR/FBXW7-AS1 receptor. This is Vascular endothelial growth factor A (VEGFA) from Mesocricetus auratus (Golden hamster).